A 214-amino-acid polypeptide reads, in one-letter code: Cytochrome b (214 aa).

A run of 4 helical transmembrane segments spans residues 31–51 (FGSM…FLAF), 75–96 (WIMQ…YIHI), 111–131 (WVSG…GYVL), and 176–196 (FFAL…IHIL). Residues His-81 and His-95 each contribute to the heme b site. His-180 and His-194 together coordinate heme b. His-199 serves as a coordination point for a ubiquinone.

The protein belongs to the cytochrome b family. In terms of assembly, the cytochrome bc1 complex contains 3 respiratory subunits (MT-CYB, CYC1 and UQCRFS1), 2 core proteins (UQCRC1 and UQCRC2) and probably 6 low-molecular weight proteins. Heme b serves as cofactor.

It is found in the mitochondrion inner membrane. Functionally, component of the ubiquinol-cytochrome c reductase complex (complex III or cytochrome b-c1 complex) that is part of the mitochondrial respiratory chain. The b-c1 complex mediates electron transfer from ubiquinol to cytochrome c. Contributes to the generation of a proton gradient across the mitochondrial membrane that is then used for ATP synthesis. The polypeptide is Cytochrome b (MT-CYB) (Gloydius blomhoffii (Mamushi)).